Here is a 116-residue protein sequence, read N- to C-terminus: MTNKIIQQLEAEQMTKEIPPFAPGDTVIVQVKVKEGDRQRLQAFEGVVIGKRNRGLNSAFTVRKISNGVGVERTFQSYSPMVDSISVKRRGDVRKAKLYYLRALSGKAARIKEKLV.

The protein belongs to the bacterial ribosomal protein bL19 family.

Its function is as follows. This protein is located at the 30S-50S ribosomal subunit interface and may play a role in the structure and function of the aminoacyl-tRNA binding site. The sequence is that of Large ribosomal subunit protein bL19 from Stutzerimonas stutzeri (strain A1501) (Pseudomonas stutzeri).